We begin with the raw amino-acid sequence, 299 residues long: Probable endonuclease 4 (299 aa).

Residues histidine 69, histidine 110, glutamate 145, aspartate 179, histidine 182, histidine 214, aspartate 227, histidine 229, and glutamate 259 each contribute to the Zn(2+) site.

This sequence belongs to the AP endonuclease 2 family. It depends on Zn(2+) as a cofactor.

It catalyses the reaction Endonucleolytic cleavage to 5'-phosphooligonucleotide end-products.. Endonuclease IV plays a role in DNA repair. It cleaves phosphodiester bonds at apurinic or apyrimidinic (AP) sites, generating a 3'-hydroxyl group and a 5'-terminal sugar phosphate. The protein is Probable endonuclease 4 of Geobacillus kaustophilus (strain HTA426).